The following is a 570-amino-acid chain: piRNA biogenesis protein EXD1 (570 aa).

A 3'-5' exonuclease domain is found at 135-307 (YTVIDQFQQK…LPPSLLKILA (173 aa)). Basic and acidic residues-rich tracts occupy residues 433–442 (DEKFLDKESK) and 453–465 (PRKE…DSKN). A disordered region spans residues 433-485 (DEKFLDKESKQTTAKSQIVPPRKEGEAHKDSKNKPGCWESAGPEDPRAQKAHA).

The protein belongs to the EXD1 family. Homodimer. Component of the PET complex, at least composed of EXD1, PIWIL2, TDRD12 and piRNAs.

It localises to the cytoplasm. Functionally, RNA-binding component of the PET complex, a multiprotein complex required for the processing of piRNAs during spermatogenesis. The piRNA metabolic process mediates the repression of transposable elements during meiosis by forming complexes composed of piRNAs and Piwi proteins and governs the methylation and subsequent repression of transposable elements, preventing their mobilization, which is essential for the germline integrity. The PET complex is required during the secondary piRNAs metabolic process for the PIWIL2 slicing-triggered loading of PIWIL4 piRNAs. In the PET complex, EXD1 probably acts as an RNA adapter. EXD1 is an inactive exonuclease. In Mus musculus (Mouse), this protein is piRNA biogenesis protein EXD1 (Exd1).